The following is a 673-amino-acid chain: L-type lectin-domain containing receptor kinase SIT2 (673 aa).

Positions 1–27 are cleaved as a signal peptide; sequence MVLPKPEMPFFVLLLFLGLGCLRPAAA. The Extracellular portion of the chain corresponds to 28–296; sequence TDERFVFNGF…FPKPRSKTLE (269 aa). Residues 32–270 are legume-lectin like; sequence FVFNGFTGAN…VLGWSFKMNG (239 aa). N-linked (GlcNAc...) asparagine glycans are attached at residues Asn41, Asn60, Asn82, Asn118, Asn138, Asn191, Asn214, Asn235, and Asn276. A helical transmembrane segment spans residues 297 to 317; that stretch reads IVLPIASAVLVFAVAAAVFVF. Topologically, residues 318–673 are cytoplasmic; the sequence is MRRRRMFSEL…GTFSDLSGGR (356 aa). Residues 352–631 form the Protein kinase domain; sequence FSDKRLLGIG…LEGDVPLPEL (280 aa). ATP is bound by residues 358 to 366 and Lys381; that span reads LGIGGFGRV. Catalysis depends on Asp477, which acts as the Proton acceptor.

In the C-terminal section; belongs to the protein kinase superfamily. Ser/Thr protein kinase family. It in the N-terminal section; belongs to the leguminous lectin family. As to expression, mainly expressed in root epidermal cells.

Its subcellular location is the cell membrane. It catalyses the reaction L-seryl-[protein] + ATP = O-phospho-L-seryl-[protein] + ADP + H(+). It carries out the reaction L-threonyl-[protein] + ATP = O-phospho-L-threonyl-[protein] + ADP + H(+). Its function is as follows. Lectin-domain containing receptor kinase involved in salt stress response. Acts as a negative regulator of salt tolerance. This chain is L-type lectin-domain containing receptor kinase SIT2, found in Oryza sativa subsp. japonica (Rice).